The primary structure comprises 445 residues: C-terminal-binding protein 2 (445 aa).

Residue Arg22 is modified to Asymmetric dimethylarginine. NAD(+) contacts are provided by residues Ser106, 186–191 (IGFGRT), Asp210, 243–249 (CNLNEHN), 270–272 (AAR), and Asp296. Residue Arg272 is part of the active site. Residue Glu301 is part of the active site. His321 functions as the Proton donor in the catalytic mechanism. 321–324 (HTAW) is a binding site for NAD(+). The segment at 414 to 445 (THNLPTVAHPSQAPSPNQPTKHGDNREHPNEQ) is disordered. Position 428 is a phosphoserine; by HIPK2 (Ser428). A compositionally biased stretch (basic and acidic residues) spans 434 to 445 (KHGDNREHPNEQ).

This sequence belongs to the D-isomer specific 2-hydroxyacid dehydrogenase family. Interacts with HIPK2 and PNN. Interacts with the transcription factors ZNF217, BKLF, delta EF1/AREB6/ZEB, EVI-1 and Friend of GATA (FOG) via the consensus motif P-X-[DNS]-L-[STVA]. Also interacts with the C-terminus of adenovirus E1A protein. Can form a complex with BKLF on a CACCC-box oligonucleotide. Can form homodimers or heterodimers of CTBP1 and CTBP2. Interacts with NRIP1 and WIZ. Interacts with PRDM16; represses white adipose tissue (WAT)-specific genes expression. Interacts with MCRIP1. Phosphorylation by HIPK2 on Ser-428 induces proteasomal degradation. In terms of tissue distribution, found in all tissues except spleen and liver.

It localises to the nucleus. The protein resides in the synapse. Corepressor targeting diverse transcription regulators. Isoform 2 probably acts as a scaffold for specialized synapses. Functions in brown adipose tissue (BAT) differentiation. In Mus musculus (Mouse), this protein is C-terminal-binding protein 2 (Ctbp2).